The sequence spans 247 residues: ATP synthase subunit a, chloroplastic (247 aa).

Transmembrane regions (helical) follow at residues 38–58 (QVLI…AIAV), 95–115 (VPFI…GALL), 134–154 (INTT…AGLT), 199–219 (LVVV…VMFL), and 220–240 (GLFT…AYIG).

Belongs to the ATPase A chain family. As to quaternary structure, F-type ATPases have 2 components, CF(1) - the catalytic core - and CF(0) - the membrane proton channel. CF(1) has five subunits: alpha(3), beta(3), gamma(1), delta(1), epsilon(1). CF(0) has four main subunits: a, b, b' and c.

It is found in the plastid. The protein localises to the chloroplast thylakoid membrane. Its function is as follows. Key component of the proton channel; it plays a direct role in the translocation of protons across the membrane. The chain is ATP synthase subunit a, chloroplastic from Calycanthus floridus var. glaucus (Eastern sweetshrub).